The primary structure comprises 193 residues: LOB domain-containing protein 12 (193 aa).

The 102-residue stretch at 7–108 (SPCASCKLLR…MQLAVAQAEI (102 aa)) folds into the LOB domain.

Belongs to the LOB domain-containing protein family. Expressed predominantly in roots, and at low levels in shoots, floral stems and open flowers.

The sequence is that of LOB domain-containing protein 12 (LBD12) from Arabidopsis thaliana (Mouse-ear cress).